Consider the following 500-residue polypeptide: Cytochrome P450 71B22 (500 aa).

Residues 1 to 21 form a helical membrane-spanning segment; sequence MSISLYFLLLLPLFLIFFKKL. Heme is bound at residue C441.

Belongs to the cytochrome P450 family. The cofactor is heme.

Its subcellular location is the membrane. This chain is Cytochrome P450 71B22 (CYP71B22), found in Arabidopsis thaliana (Mouse-ear cress).